Here is a 162-residue protein sequence, read N- to C-terminus: Interleukin-15 (162 aa).

A signal peptide spans 1 to 29 (MRILKPYLRSTSIQCYLCLLLNSHFLTEA). Positions 30–48 (GIHVFILGCISAGLPKTEA) are excised as a propeptide. 2 cysteine pairs are disulfide-bonded: Cys83–Cys133 and Cys90–Cys136. N-linked (GlcNAc...) asparagine glycosylation is found at Asn113, Asn121, and Asn127.

The protein belongs to the IL-15/IL-21 family.

It localises to the secreted. In terms of biological role, cytokine that plays a major role in the development of inflammatory and protective immune responses to microbial invaders and parasites by modulating immune cells of both the innate and adaptive immune systems. Stimulates the proliferation of natural killer cells, T-cells and B-cells and promotes the secretion of several cytokines. In monocytes, induces the production of IL8 and monocyte chemotactic protein 1/CCL2, two chemokines that attract neutrophils and monocytes respectively to sites of infection. Unlike most cytokines, which are secreted in soluble form, IL15 is expressed in association with its high affinity IL15RA on the surface of IL15-producing cells and delivers signals to target cells that express IL2RB and IL2RG receptor subunits. Binding to its receptor triggers the phosphorylation of JAK1 and JAK3 and the recruitment and subsequent phosphorylation of signal transducer and activator of transcription-3/STAT3 and STAT5. In mast cells, induces the rapid tyrosine phosphorylation of STAT6 and thereby controls mast cell survival and release of cytokines such as IL4. The sequence is that of Interleukin-15 (IL15) from Ovis aries (Sheep).